A 682-amino-acid chain; its full sequence is MKKINAGNLFAGMRSSSVIAGLFIVLIVSIVLLFANFAYLNTQSNHDKQYIGHAGELRVLSQRIAKNATEAAAGKGEAFKLLKDARNDFEKRWNILVNGDESTSLPPSPEAVKPQMDVVQQDWDGLRKNADSILASEQTVLSLHQVASTLAETIPQLQVEYEEVVDILLENGAPADQVAVAQRQSLLAERILGSVNKVLAGDENSVQAADSFGRDASLFGRVLKGMQEGNAAMSISKVTNAEAVDRLNEIAELFEFVSGSVDEILETSPDLFQVREAANNIFSVSQTLLDKASQLADGFENLAGGRSINLFAGYALGALALASIILIGLVMVRETNRRLAETAEKNDRNQAAILRLLDEIADLADGDLTVAATVTEDFTGAIADSINYSIDQLRELVETINQTAVQVAAAAQETQSTAMHLAEASEHQAQEIAGASAAINEMAVSIDQVSANASESSAVAERSVAIANKGNEVVHNTITGMDNIREQIQDTSKRIKRLGESSQEIGDIVSLINDIADQTNILALNAAIQASMAGDAGRGFAVVADEVQRLAERSSAATKQIEALVKTIQTDTNEAVISMEQTTSEVVRGARLAQDAGVALEEIEKVSKTLAALIQNISNAARQQASSAGHISNTMNVIQEITSQTSAGTTATARSIGNLAKMASEMRNSVSGFKLPEGVEQA.

Topologically, residues 1–14 are cytoplasmic; it reads MKKINAGNLFAGMR. A helical transmembrane segment spans residues 15-38; that stretch reads SSSVIAGLFIVLIVSIVLLFANFA. Residues 39-306 lie on the Periplasmic side of the membrane; sequence YLNTQSNHDK…DGFENLAGGR (268 aa). A helical membrane pass occupies residues 307 to 333; sequence SINLFAGYALGALALASIILIGLVMVR. The Cytoplasmic portion of the chain corresponds to 334-682; that stretch reads ETNRRLAETA…FKLPEGVEQA (349 aa). The 52-residue stretch at 347 to 398 folds into the HAMP domain; sequence DRNQAAILRLLDEIADLADGDLTVAATVTEDFTGAIADSINYSIDQLRELVE. A Methyl-accepting transducer domain is found at 403–639; sequence TAVQVAAAAQ…HISNTMNVIQ (237 aa).

This sequence belongs to the methyl-accepting chemotaxis (MCP) protein family.

The protein localises to the cell inner membrane. Functionally, may be a part of a signal-transduction system that regulates twitching motility by controlling pilus function (extension and retraction). The polypeptide is Protein PilJ (pilJ) (Pseudomonas aeruginosa (strain ATCC 15692 / DSM 22644 / CIP 104116 / JCM 14847 / LMG 12228 / 1C / PRS 101 / PAO1)).